A 459-amino-acid polypeptide reads, in one-letter code: Protein phosphatase 1M (459 aa).

Basic residues predominate over residues 1-10 (MSAGWFRRRF). Residues 1-64 (MSAGWFRRRF…SRPVRSPARG (64 aa)) form a disordered region. A compositionally biased stretch (pro residues) spans 14-27 (EPLPAPRPPGPHAS). Over residues 38–48 (RGSSSSPGAAD) the composition is skewed to low complexity. Mn(2+) is bound by residues aspartate 125 and glycine 126. Residues 162–459 (MHLNGRCICP…HSQGQESSDH (298 aa)) enclose the PPM-type phosphatase domain.

It belongs to the PP2C family. Requires Mg(2+) as cofactor. Mn(2+) is required as a cofactor.

The protein resides in the nucleus. The enzyme catalyses O-phospho-L-seryl-[protein] + H2O = L-seryl-[protein] + phosphate. It carries out the reaction O-phospho-L-threonyl-[protein] + H2O = L-threonyl-[protein] + phosphate. The chain is Protein phosphatase 1M (PPM1M) from Homo sapiens (Human).